Consider the following 182-residue polypeptide: Large ribosomal subunit protein uL5 (182 aa).

The protein belongs to the universal ribosomal protein uL5 family. In terms of assembly, part of the 50S ribosomal subunit; part of the 5S rRNA/L5/L18/L25 subcomplex. Contacts the 5S rRNA and the P site tRNA. Forms a bridge to the 30S subunit in the 70S ribosome.

In terms of biological role, this is one of the proteins that bind and probably mediate the attachment of the 5S RNA into the large ribosomal subunit, where it forms part of the central protuberance. In the 70S ribosome it contacts protein S13 of the 30S subunit (bridge B1b), connecting the 2 subunits; this bridge is implicated in subunit movement. Contacts the P site tRNA; the 5S rRNA and some of its associated proteins might help stabilize positioning of ribosome-bound tRNAs. The polypeptide is Large ribosomal subunit protein uL5 (Borreliella afzelii (strain PKo) (Borrelia afzelii)).